The primary structure comprises 192 residues: Imidazole glycerol phosphate synthase subunit HisH (192 aa).

The Glutamine amidotransferase type-1 domain occupies 1–192 (MIAIIDYGLG…QALKGGFIND (192 aa)). Cys-77 functions as the Nucleophile in the catalytic mechanism. Catalysis depends on residues His-169 and Glu-171.

Heterodimer of HisH and HisF.

It is found in the cytoplasm. The enzyme catalyses 5-[(5-phospho-1-deoxy-D-ribulos-1-ylimino)methylamino]-1-(5-phospho-beta-D-ribosyl)imidazole-4-carboxamide + L-glutamine = D-erythro-1-(imidazol-4-yl)glycerol 3-phosphate + 5-amino-1-(5-phospho-beta-D-ribosyl)imidazole-4-carboxamide + L-glutamate + H(+). It carries out the reaction L-glutamine + H2O = L-glutamate + NH4(+). The protein operates within amino-acid biosynthesis; L-histidine biosynthesis; L-histidine from 5-phospho-alpha-D-ribose 1-diphosphate: step 5/9. Functionally, IGPS catalyzes the conversion of PRFAR and glutamine to IGP, AICAR and glutamate. The HisH subunit catalyzes the hydrolysis of glutamine to glutamate and ammonia as part of the synthesis of IGP and AICAR. The resulting ammonia molecule is channeled to the active site of HisF. The sequence is that of Imidazole glycerol phosphate synthase subunit HisH from Staphylococcus epidermidis (strain ATCC 12228 / FDA PCI 1200).